The following is a 206-amino-acid chain: MILSDKDIFDYVNSKRVLIEPFNSKFVGPCSYDVTLGSEFIKYKDDVYDLKKNLSHNKFEIENSIMVCPLNHHLDETIIENYKEKYNVDCVVSGGLLGTTNEYVELPNDVCAQYQGRSSFGRVFLQTHQTAGWIDSGFKGKITLEIVAYDKPVILYKNQRVGQLIFSKTLSPADIGYSDRKCSKYAGQKSVMASLIKKDFEIDEEE.

DCTP-binding positions include 117–122, Asp-135, 143–145, Gln-163, Tyr-177, Lys-184, and Gln-188; these read RSSFGR and TLE. Catalysis depends on Glu-145, which acts as the Proton donor/acceptor.

Belongs to the dCTP deaminase family. In terms of assembly, homotrimer.

The catalysed reaction is dCTP + 2 H2O = dUMP + NH4(+) + diphosphate. Its pathway is pyrimidine metabolism; dUMP biosynthesis; dUMP from dCTP: step 1/1. Functionally, bifunctional enzyme that catalyzes both the deamination of dCTP to dUTP and the hydrolysis of dUTP to dUMP without releasing the toxic dUTP intermediate. This is dCTP deaminase, dUMP-forming from Methanococcus maripaludis (strain C6 / ATCC BAA-1332).